Consider the following 294-residue polypeptide: Pyridoxal 5'-phosphate synthase subunit PdxS (294 aa).

Asp-24 contacts D-ribose 5-phosphate. Catalysis depends on Lys-81, which acts as the Schiff-base intermediate with D-ribose 5-phosphate. Gly-153 contributes to the D-ribose 5-phosphate binding site. Arg-165 is a D-glyceraldehyde 3-phosphate binding site. D-ribose 5-phosphate is bound by residues Gly-214 and 235–236 (GS).

This sequence belongs to the PdxS/SNZ family. As to quaternary structure, in the presence of PdxT, forms a dodecamer of heterodimers.

It catalyses the reaction aldehydo-D-ribose 5-phosphate + D-glyceraldehyde 3-phosphate + L-glutamine = pyridoxal 5'-phosphate + L-glutamate + phosphate + 3 H2O + H(+). The protein operates within cofactor biosynthesis; pyridoxal 5'-phosphate biosynthesis. Functionally, catalyzes the formation of pyridoxal 5'-phosphate from ribose 5-phosphate (RBP), glyceraldehyde 3-phosphate (G3P) and ammonia. The ammonia is provided by the PdxT subunit. Can also use ribulose 5-phosphate and dihydroxyacetone phosphate as substrates, resulting from enzyme-catalyzed isomerization of RBP and G3P, respectively. In Geobacillus thermodenitrificans (strain NG80-2), this protein is Pyridoxal 5'-phosphate synthase subunit PdxS.